The following is a 264-amino-acid chain: Ribosomal RNA small subunit methyltransferase J (264 aa).

Residues 111–112 (RD), 127–128 (ER), and Asp-180 contribute to the S-adenosyl-L-methionine site.

It belongs to the methyltransferase superfamily. RsmJ family.

The protein resides in the cytoplasm. It catalyses the reaction guanosine(1516) in 16S rRNA + S-adenosyl-L-methionine = N(2)-methylguanosine(1516) in 16S rRNA + S-adenosyl-L-homocysteine + H(+). Its function is as follows. Specifically methylates the guanosine in position 1516 of 16S rRNA. The sequence is that of Ribosomal RNA small subunit methyltransferase J from Alkalilimnicola ehrlichii (strain ATCC BAA-1101 / DSM 17681 / MLHE-1).